Here is a 43-residue protein sequence, read N- to C-terminus: Protein PsbN (43 aa).

A helical transmembrane segment spans residues 5–27 (TLVAISISGLLVSFTGYALYTAF).

Belongs to the PsbN family.

It localises to the plastid. Its subcellular location is the chloroplast thylakoid membrane. Functionally, may play a role in photosystem I and II biogenesis. The polypeptide is Protein PsbN (Houttuynia cordata (Chameleon plant)).